The sequence spans 310 residues: Ribosomal RNA small subunit methyltransferase H (310 aa).

Residues A33–H35, D53, F79, D100, and Q107 each bind S-adenosyl-L-methionine.

It belongs to the methyltransferase superfamily. RsmH family.

The protein localises to the cytoplasm. It catalyses the reaction cytidine(1402) in 16S rRNA + S-adenosyl-L-methionine = N(4)-methylcytidine(1402) in 16S rRNA + S-adenosyl-L-homocysteine + H(+). In terms of biological role, specifically methylates the N4 position of cytidine in position 1402 (C1402) of 16S rRNA. This is Ribosomal RNA small subunit methyltransferase H from Clostridium beijerinckii (strain ATCC 51743 / NCIMB 8052) (Clostridium acetobutylicum).